A 428-amino-acid chain; its full sequence is Trigger factor (428 aa).

A PPIase FKBP-type domain is found at 163–248 (GDTAVIDFEG…VHEVKAKQLP (86 aa)).

Belongs to the FKBP-type PPIase family. Tig subfamily.

It localises to the cytoplasm. It catalyses the reaction [protein]-peptidylproline (omega=180) = [protein]-peptidylproline (omega=0). In terms of biological role, involved in protein export. Acts as a chaperone by maintaining the newly synthesized protein in an open conformation. Functions as a peptidyl-prolyl cis-trans isomerase. The sequence is that of Trigger factor from Geobacillus thermodenitrificans (strain NG80-2).